A 355-amino-acid polypeptide reads, in one-letter code: UDP-N-acetylglucosamine--N-acetylmuramyl-(pentapeptide) pyrophosphoryl-undecaprenol N-acetylglucosamine transferase (355 aa).

UDP-N-acetyl-alpha-D-glucosamine-binding positions include 15–17 (TGG), N127, R163, S191, I244, 263–268 (ALTVSE), and Q288.

It belongs to the glycosyltransferase 28 family. MurG subfamily.

Its subcellular location is the cell inner membrane. It catalyses the reaction di-trans,octa-cis-undecaprenyl diphospho-N-acetyl-alpha-D-muramoyl-L-alanyl-D-glutamyl-meso-2,6-diaminopimeloyl-D-alanyl-D-alanine + UDP-N-acetyl-alpha-D-glucosamine = di-trans,octa-cis-undecaprenyl diphospho-[N-acetyl-alpha-D-glucosaminyl-(1-&gt;4)]-N-acetyl-alpha-D-muramoyl-L-alanyl-D-glutamyl-meso-2,6-diaminopimeloyl-D-alanyl-D-alanine + UDP + H(+). It functions in the pathway cell wall biogenesis; peptidoglycan biosynthesis. Its function is as follows. Cell wall formation. Catalyzes the transfer of a GlcNAc subunit on undecaprenyl-pyrophosphoryl-MurNAc-pentapeptide (lipid intermediate I) to form undecaprenyl-pyrophosphoryl-MurNAc-(pentapeptide)GlcNAc (lipid intermediate II). In Salmonella enteritidis PT4 (strain P125109), this protein is UDP-N-acetylglucosamine--N-acetylmuramyl-(pentapeptide) pyrophosphoryl-undecaprenol N-acetylglucosamine transferase.